The primary structure comprises 327 residues: Tagatose 1,6-diphosphate aldolase 2 (327 aa).

The protein belongs to the aldolase LacD family.

The catalysed reaction is D-tagatofuranose 1,6-bisphosphate = D-glyceraldehyde 3-phosphate + dihydroxyacetone phosphate. Its pathway is carbohydrate metabolism; D-tagatose 6-phosphate degradation; D-glyceraldehyde 3-phosphate and glycerone phosphate from D-tagatose 6-phosphate: step 2/2. This Streptococcus pyogenes serotype M1 protein is Tagatose 1,6-diphosphate aldolase 2 (lacD2).